Reading from the N-terminus, the 410-residue chain is Phosphoglycerate kinase (410 aa).

Substrate-binding positions include 19–21 (DLN), arginine 34, 57–60 (HQGK), arginine 114, and arginine 154. ATP is bound by residues glutamate 332 and 358-361 (GGHS).

This sequence belongs to the phosphoglycerate kinase family. Homodimer.

The protein localises to the cytoplasm. The enzyme catalyses (2R)-3-phosphoglycerate + ATP = (2R)-3-phospho-glyceroyl phosphate + ADP. It participates in carbohydrate degradation; glycolysis; pyruvate from D-glyceraldehyde 3-phosphate: step 2/5. This is Phosphoglycerate kinase (pgk) from Pyrococcus abyssi (strain GE5 / Orsay).